The primary structure comprises 163 residues: Aspartate 1-decarboxylase (163 aa).

S25 acts as the Schiff-base intermediate with substrate; via pyruvic acid in catalysis. Pyruvic acid (Ser) is present on S25. T57 contributes to the substrate binding site. The Proton donor role is filled by Y58. Position 73 to 75 (G73 to A75) interacts with substrate.

Belongs to the PanD family. Heterooctamer of four alpha and four beta subunits. Pyruvate serves as cofactor. In terms of processing, is synthesized initially as an inactive proenzyme, which is activated by self-cleavage at a specific serine bond to produce a beta-subunit with a hydroxyl group at its C-terminus and an alpha-subunit with a pyruvoyl group at its N-terminus.

It is found in the cytoplasm. It carries out the reaction L-aspartate + H(+) = beta-alanine + CO2. Its pathway is cofactor biosynthesis; (R)-pantothenate biosynthesis; beta-alanine from L-aspartate: step 1/1. Catalyzes the pyruvoyl-dependent decarboxylation of aspartate to produce beta-alanine. This is Aspartate 1-decarboxylase from Saccharopolyspora erythraea (strain ATCC 11635 / DSM 40517 / JCM 4748 / NBRC 13426 / NCIMB 8594 / NRRL 2338).